A 318-amino-acid chain; its full sequence is Pantothenate kinase (318 aa).

An ATP-binding site is contributed by 96–103 (GSVSVGKS).

It belongs to the prokaryotic pantothenate kinase family.

The protein localises to the cytoplasm. It carries out the reaction (R)-pantothenate + ATP = (R)-4'-phosphopantothenate + ADP + H(+). It functions in the pathway cofactor biosynthesis; coenzyme A biosynthesis; CoA from (R)-pantothenate: step 1/5. In Bradyrhizobium sp. (strain ORS 278), this protein is Pantothenate kinase.